The sequence spans 251 residues: Ribonuclease PH (251 aa).

Residues Arg87 and Gly125–Arg127 each bind phosphate.

The protein belongs to the RNase PH family. In terms of assembly, homohexameric ring arranged as a trimer of dimers.

It catalyses the reaction tRNA(n+1) + phosphate = tRNA(n) + a ribonucleoside 5'-diphosphate. Phosphorolytic 3'-5' exoribonuclease that plays an important role in tRNA 3'-end maturation. Removes nucleotide residues following the 3'-CCA terminus of tRNAs; can also add nucleotides to the ends of RNA molecules by using nucleoside diphosphates as substrates, but this may not be physiologically important. Probably plays a role in initiation of 16S rRNA degradation (leading to ribosome degradation) during starvation. This chain is Ribonuclease PH, found in Saccharopolyspora erythraea (strain ATCC 11635 / DSM 40517 / JCM 4748 / NBRC 13426 / NCIMB 8594 / NRRL 2338).